The chain runs to 76 residues: Exodeoxyribonuclease 7 small subunit (76 aa).

This sequence belongs to the XseB family. In terms of assembly, heterooligomer composed of large and small subunits.

The protein resides in the cytoplasm. It catalyses the reaction Exonucleolytic cleavage in either 5'- to 3'- or 3'- to 5'-direction to yield nucleoside 5'-phosphates.. Its function is as follows. Bidirectionally degrades single-stranded DNA into large acid-insoluble oligonucleotides, which are then degraded further into small acid-soluble oligonucleotides. In Staphylococcus haemolyticus (strain JCSC1435), this protein is Exodeoxyribonuclease 7 small subunit.